Here is a 579-residue protein sequence, read N- to C-terminus: Glutamine--tRNA ligase (579 aa).

Positions proline 41–histidine 51 match the 'HIGH' region motif. ATP contacts are provided by residues glutamate 42 to asparagine 44 and histidine 48 to alanine 54. L-glutamine-binding residues include aspartate 74 and tyrosine 218. ATP is bound by residues threonine 237, arginine 285 to leucine 286, and methionine 293 to lysine 295. A 'KMSKS' region motif is present at residues valine 292–arginine 296.

This sequence belongs to the class-I aminoacyl-tRNA synthetase family. Monomer.

The protein resides in the cytoplasm. The catalysed reaction is tRNA(Gln) + L-glutamine + ATP = L-glutaminyl-tRNA(Gln) + AMP + diphosphate. This chain is Glutamine--tRNA ligase, found in Xanthomonas euvesicatoria pv. vesicatoria (strain 85-10) (Xanthomonas campestris pv. vesicatoria).